Consider the following 440-residue polypeptide: Chromosomal replication initiator protein DnaA (440 aa).

Positions 1-75 (MNPNQILENL…QSGNKASVLI (75 aa)) are domain I, interacts with DnaA modulators. The domain II stretch occupies residues 75–99 (IQAQSAKQSSKSTKIDIAHIKAQST). Positions 100–316 (ILNPSFTFES…GIIISLNAYA (217 aa)) are domain III, AAA+ region. Residues glycine 146, glycine 148, lysine 149, and threonine 150 each contribute to the ATP site. Residues 317 to 440 (TILGQEITLE…KNKILVKSQS (124 aa)) are domain IV, binds dsDNA.

Belongs to the DnaA family. In terms of assembly, oligomerizes as a right-handed, spiral filament on DNA at oriC.

The protein resides in the cytoplasm. Its function is as follows. Plays an essential role in the initiation and regulation of chromosomal replication. ATP-DnaA binds to the origin of replication (oriC) to initiate formation of the DNA replication initiation complex once per cell cycle. Binds the DnaA box (a 9 base pair repeat at the origin) and separates the double-stranded (ds)DNA. Forms a right-handed helical filament on oriC DNA; dsDNA binds to the exterior of the filament while single-stranded (ss)DNA is stabiized in the filament's interior. The ATP-DnaA-oriC complex binds and stabilizes one strand of the AT-rich DNA unwinding element (DUE), permitting loading of DNA polymerase. After initiation quickly degrades to an ADP-DnaA complex that is not apt for DNA replication. Binds acidic phospholipids. The chain is Chromosomal replication initiator protein DnaA from Campylobacter jejuni subsp. jejuni serotype O:6 (strain 81116 / NCTC 11828).